A 347-amino-acid chain; its full sequence is Transcription elongation factor A protein 3 (347 aa).

Residues 5–82 (EELLRIAKKL…KNWKRLLDSP (78 aa)) enclose the TFIIS N-terminal domain. Basic and acidic residues predominate over residues 83–100 (RTTKGEREEREKAKKEKG). A disordered region spans residues 83-168 (RTTKGEREER…TTPSSPSTPT (86 aa)). A Phosphoserine modification is found at Ser113. Over residues 119–131 (GGGEPKTRRDSVD) the composition is skewed to basic and acidic residues. Low complexity-rich tracts occupy residues 132–142 (SRSSTTSSPKR) and 157–168 (TPTTPSSPSTPT). Residue Ser139 is modified to Phosphoserine. The TFIIS central domain maps to 186–302 (VRDKCVEMLS…EHQMAKTGGT (117 aa)). The TFIIS-type zinc finger occupies 305–345 (DLLRCSKCKKKNCTYNQVQTRSADEPMTTFVLCNECGNRWK). The Zn(2+) site is built by Cys309, Cys312, Cys337, and Cys340.

Belongs to the TFS-II family. In terms of tissue distribution, liver, kidney and heart.

It localises to the nucleus. Functionally, necessary for efficient RNA polymerase II transcription elongation past template-encoded arresting sites. The arresting sites in DNA have the property of trapping a certain fraction of elongating RNA polymerases that pass through, resulting in locked ternary complexes. Cleavage of the nascent transcript by S-II allows the resumption of elongation from the new 3'-terminus. The chain is Transcription elongation factor A protein 3 (Tcea3) from Mus musculus (Mouse).